The following is a 1250-amino-acid chain: MPKIVQAGRRQRLSFSRIDEVLEMPNLIELQRNSYQWFLREGLQEMFQDISPIQDFTGNLVLEFIDYSLGEPKYSIEECKERDVTYAAPLRVRVRLINKETGEVKEQEVFMGDFPLMTPTGTFIINGAERVIVSQLVRSPGVYFSEQIDPSGKKLFFATMIPNRGAWLEFESDVNDVIYVRVDRTRKLPATVLLRALGFGSDQEILDAVGDSEYIRRTLEKDSTESEEEALIEIYKRLRPGEPPAADNARQLLETLFFEPKRYDLMHVGRYRLNKKLALKRRIVGTSTVDRVVHPETGEVLAEAGVQIDKRLAEKIDEAGVDALTVRLRDGGIVRVVANGRPDIRVKTIVRQDIVAVINYMVSLFKGLGSVDDIDHLGNRRVRSVGELLQNQFRIGLARMERVIKERMTIQDVDIITPQALINIRPVVAAVKEFFGSSQLSQFMDQTNPLAELTNKRRLSALGPGGLSRERAGYEVRDVHTSHYGRMCPIETPEGPNIGLIGALATFARINEYGFIETPYRKVDQESGRVTDEIVYLTADEEDENIIAQANEPLNPDGTFARDRVTCRYRDEILQVPPSQVDYMDVSPKQVVSIATALIPFLENDDASRALMGSNMQRQAVPLLRTEAPYVGTGMEYRSAWDSGVCVIAENDGVVLRATASEVVVQYDDMQVKKYKLTKFTRSNQGTCMNQKPIVRAGDRVRKGDVIADGPSTDQGELALGRNVLVAYMCYEGYNYEDAIIINERLVREDVFTSIHIEEHECEARDTKLGPEEITRDIPNVGEDVLKDLDERGIIRIGAEVRPGDILVGKVTPKGETELTAEERLLRAIFGEKAREVRDTSLRVPHGESGIVVDVKVFTRENGDELSPGVNELVRVYMAQKRKISQGDKMAGRHGNKGVISVIVPEEDMPFMPDGTPIDIILTPLGVPSRMNIGQIMEIHLGWAAKTLGMYVASPVFDGANEQDIREMLLKAHLPPNGKTVLYDGKTGEPFDNEVTVGYKYMLKLHHLVDDKIHARSTGPYSLVTQQPLGGKAQFGGQRFGEMEVWALEAYGAAYTLQELLTVKSDDVVGRVKTYEAIVKGENVPEPGVPESFKVLIKELQSLALDVKVLDESGNEIELRELDDEMDLSDRDLEIPTLGGAELAKPAPDAQAGEESGEAGEESEGEPEEEDVEEIDVPLDPEELEKVAGALKNPVRAGRRGAGGGLADDDQEMDEEDLFDEGDEDLADDVGLYRGRSRRLADDFGDEEEE.

Residues 1139–1226 (GGAELAKPAP…DLFDEGDEDL (88 aa)) are disordered. 2 stretches are compositionally biased toward acidic residues: residues 1155–1183 (ESGEAGEESEGEPEEEDVEEIDVPLDPEE) and 1207–1226 (ADDDQEMDEEDLFDEGDEDL).

Belongs to the RNA polymerase beta chain family. As to quaternary structure, the RNAP catalytic core consists of 2 alpha, 1 beta, 1 beta' and 1 omega subunit. When a sigma factor is associated with the core the holoenzyme is formed, which can initiate transcription.

The catalysed reaction is RNA(n) + a ribonucleoside 5'-triphosphate = RNA(n+1) + diphosphate. Functionally, DNA-dependent RNA polymerase catalyzes the transcription of DNA into RNA using the four ribonucleoside triphosphates as substrates. This is DNA-directed RNA polymerase subunit beta from Symbiobacterium thermophilum (strain DSM 24528 / JCM 14929 / IAM 14863 / T).